The following is a 419-amino-acid chain: Protein phosphatase methylesterase 1 (419 aa).

Positions 1–12 are enriched in basic residues; that stretch reads MSQLHRGMHKKP. A disordered region spans residues 1 to 75; that stretch reads MSQLHRGMHK…KSAASPTVPA (75 aa). The segment covering 32-52 has biased composition (acidic residues); the sequence is TETEETVECTEEEEEQDETDG. Active-site residues include Ser230, Asp256, and His383.

This sequence belongs to the AB hydrolase superfamily.

The catalysed reaction is [phosphatase 2A protein]-C-terminal L-leucine methyl ester + H2O = [phosphatase 2A protein]-C-terminal L-leucine + methanol + H(+). In terms of biological role, demethylates proteins that have been reversibly carboxymethylated. Demethylates the phosphatase PP2A catalytic subunit. This chain is Protein phosphatase methylesterase 1 (PPE1), found in Yarrowia lipolytica (strain CLIB 122 / E 150) (Yeast).